The chain runs to 230 residues: uncharacterized protein (230 aa).

An ABC transporter domain is found at 2–230; sequence IQLSNVRKSY…ASSGQRSVGE (229 aa). 38 to 45 provides a ligand contact to ATP; it reads GPSGSGKS.

This sequence belongs to the ABC transporter superfamily. Part of a complex composed of YknX, YknY and YknZ. The complex interacts with YknW.

It is found in the cell membrane. Its function is as follows. Part of an unusual four-component transporter, which is required for protection against the killing factor SdpC (sporulation-delaying protein). This is an uncharacterized protein from Bacillus subtilis (strain 168).